Reading from the N-terminus, the 543-residue chain is EH domain-containing protein 2 (543 aa).

Phosphoserine occurs at positions 3 and 44. The Dynamin-type G domain maps to 55–286 (FDGKPMVLVA…DLFRDIQGLP (232 aa)). The interval 65-72 (GQYSTGKT) is G1 motif. An ATP-binding site is contributed by 65-72 (GQYSTGKT). The segment at 91–92 (EP) is G2 motif. The segment at 153-156 (DTPG) is G3 motif. The tract at residues 219 to 222 (NKAD) is G4 motif. ATP is bound at residue K220. Position 243 (V243) is a region of interest, G5 motif. Residue W258 participates in ATP binding. The mediates membrane-binding stretch occupies residues 320-340 (SVFGKENKKKQLIFKLPVIFA). 5 positions are modified to phosphoserine: S438, S468, S470, S484, and S493. The region spanning 449–537 (DKSKYDEIFY…RRLVPPSKRR (89 aa)) is the EH domain. The region spanning 481–516 (LPNSVLGRIWKLSDVDRDGMLDDEEFALASHLIEAK) is the EF-hand domain. Ca(2+) contacts are provided by D494, D496, D498, M500, and E505. The segment at 521–543 (GLPTNLPRRLVPPSKRRQKGSAE) is disordered. The segment covering 534-543 (SKRRQKGSAE) has biased composition (basic residues).

The protein belongs to the TRAFAC class dynamin-like GTPase superfamily. Dynamin/Fzo/YdjA family. EHD subfamily. Homodimer and homooligomer. Interacts with EHD1. May also interact with EHD3 and EHD4. Interacts with MYOF. Interacts with EHBP1. Interacts with FER1L5 (via second C2 domain). Interacts with CAV1 in a cholesterol-dependent manner. Interacts (via EH domain) with PACSIN2 (via NPF motifs); this interaction probably stabilizes the caveolae.

It is found in the cell membrane. It localises to the membrane. Its subcellular location is the caveola. The protein resides in the endosome membrane. The protein localises to the cytoplasm. It is found in the cytosol. With respect to regulation, the very low intrinsic ATPase activity is increased upon interaction with liposomes. In terms of biological role, ATP- and membrane-binding protein that controls membrane reorganization/tubulation upon ATP hydrolysis. Plays a role in membrane trafficking between the plasma membrane and endosomes. Important for the internalization of GLUT4. Required for fusion of myoblasts to skeletal muscle myotubes. Required for normal translocation of FER1L5 to the plasma membrane. Regulates the equilibrium between cell surface-associated and cell surface-dissociated caveolae by constraining caveolae at the cell membrane. This chain is EH domain-containing protein 2, found in Rattus norvegicus (Rat).